The sequence spans 502 residues: MSISMLQDAQTRTLAAALAGIKQEDVHLDRSMSLSPPMSANTSATSAAAIYPAMGLQQAAAASAFGMLSPTQLLAANRQAAAFMAQLPMSTLANTLFPHNPAALFGAWAAQQSLPPQGTHLHSPPASPHSPLSTPLGSGKHPLNSPNSTPQHHEPAKKARKLSVKKEFQTEISMSVNDMYHTSGGPISPPSSGSSPNSTHDGAGGNAGCVGVSKDPSRDKSFTCKICSRSFGYKHVLQNHERTHTGEKPFECPECHKRFTRDHHLKTHMRLHTGEKPYHCSHCDRQFVQVANLRRHLRVHTGERPYTCEICDGKFSDSNQLKSHMLVHNGEKPFECERCHMKFRRRHHLMNHKCGIQSPPTPALSPAMSGDYPVAISAIAIEASTNRFAAMCATYGGSNESVDMEKATPEDDGPLDLSEDGASSVDGHCSNIARRKAQDIRRVFRLPPPQIPHVPSDMPEQTEPEDLSMHSPRSIGSHEQTDDIDLYDLDDAPASYMGHQQH.

Disordered regions lie at residues 115-164 (PPQG…KLSV) and 178-202 (DMYHTSGGPISPPSSGSSPNSTHDG). 2 stretches are compositionally biased toward low complexity: residues 119-136 (THLHSPPASPHSPLSTPL) and 183-198 (SGGPISPPSSGSSPNS). 5 C2H2-type zinc fingers span residues 222 to 244 (FTCKICSRSFGYKHVLQNHERTH), 250 to 272 (FECPECHKRFTRDHHLKTHMRLH), 278 to 300 (YHCSHCDRQFVQVANLRRHLRVH), 306 to 328 (YTCEICDGKFSDSNQLKSHMLVH), and 334 to 354 (FECERCHMKFRRRHHLMNHKC). Disordered stretches follow at residues 399 to 427 (NESVDMEKATPEDDGPLDLSEDGASSVDG) and 445 to 502 (RLPP…HQQH). The segment covering 410–419 (EDDGPLDLSE) has biased composition (acidic residues). Ser468, Ser471, and Ser477 each carry phosphoserine. Positions 482–491 (DDIDLYDLDD) are enriched in acidic residues.

Belongs to the krueppel C2H2-type zinc-finger protein family.

The protein resides in the nucleus. Its function is as follows. Krueppel is a gap class segmentation protein. It is involved in the segmentation of the embryo and in the differentiation of the Malpighian tubules. The chain is Protein krueppel (Kr) from Drosophila melanogaster (Fruit fly).